The following is a 244-amino-acid chain: N-(5'-phosphoribosyl)anthranilate isomerase 3, chloroplastic (244 aa).

A chloroplast-targeting transit peptide spans 1–32 (MSTGISSDLHLHPRALNFSKTSKSGLSNRKVS).

The protein belongs to the TrpF family.

The protein resides in the plastid. It localises to the chloroplast. The enzyme catalyses N-(5-phospho-beta-D-ribosyl)anthranilate = 1-(2-carboxyphenylamino)-1-deoxy-D-ribulose 5-phosphate. It functions in the pathway amino-acid biosynthesis; L-tryptophan biosynthesis; L-tryptophan from chorismate: step 3/5. The polypeptide is N-(5'-phosphoribosyl)anthranilate isomerase 3, chloroplastic (PAI3) (Arabidopsis thaliana (Mouse-ear cress)).